A 420-amino-acid chain; its full sequence is UDP-glucuronic acid decarboxylase 1 (420 aa).

At methionine 1 the chain carries N-acetylmethionine. Over 1 to 19 the chain is Cytoplasmic; that stretch reads MVSKALLRLVSAVNRRRMK. A helical; Signal-anchor for type II membrane protein transmembrane segment spans residues 20 to 40; that stretch reads LLLGIALLAYVASVWGNFVNM. The Lumenal portion of the chain corresponds to 41–420; that stretch reads RSIQENGELK…RIKKGRTRHN (380 aa). The residue at position 94 (threonine 94) is a Phosphothreonine. Residues glycine 98, phenylalanine 99, valine 100, aspartate 119, asparagine 120, phenylalanine 122, threonine 123, glycine 124, aspartate 144, and valine 145 each coordinate NAD(+). Residues leucine 149 and tyrosine 150 each contribute to the UDP-alpha-D-glucuronate site. NAD(+) is bound by residues leucine 159 and serine 161. Lysine 177 is a UDP-alpha-D-glucuronate binding site. NAD(+) is bound at residue threonine 178. 4 residues coordinate UDP-alpha-D-glucuronate: asparagine 185, glycine 188, lysine 191, and arginine 192. Residues alanine 200, tyrosine 231, and lysine 235 each coordinate NAD(+). The active-site Proton acceptor is the tyrosine 231. 3 residues coordinate UDP-alpha-D-glucuronate: tyrosine 245, glutamine 248, and glutamate 249. Residues threonine 261, histidine 267, and arginine 272 each contribute to the NAD(+) site. Asparagine 316 carries N-linked (GlcNAc...) asparagine glycosylation.

This sequence belongs to the NAD(P)-dependent epimerase/dehydratase family. UDP-glucuronic acid decarboxylase subfamily. As to quaternary structure, homodimer and homotetramer. Interacts with AKT1. NAD(+) serves as cofactor.

Its subcellular location is the golgi apparatus. It is found in the golgi stack membrane. The enzyme catalyses UDP-alpha-D-glucuronate + H(+) = UDP-alpha-D-xylose + CO2. It participates in nucleotide-sugar biosynthesis; UDP-alpha-D-xylose biosynthesis; UDP-alpha-D-xylose from UDP-alpha-D-glucuronate: step 1/1. Functionally, catalyzes the NAD-dependent decarboxylation of UDP-glucuronic acid to UDP-xylose. Necessary for the biosynthesis of the core tetrasaccharide in glycosaminoglycan biosynthesis. The polypeptide is UDP-glucuronic acid decarboxylase 1 (UXS1) (Pongo abelii (Sumatran orangutan)).